The primary structure comprises 459 residues: Argininosuccinate lyase (459 aa).

It belongs to the lyase 1 family. Argininosuccinate lyase subfamily.

The protein resides in the cytoplasm. It catalyses the reaction 2-(N(omega)-L-arginino)succinate = fumarate + L-arginine. It functions in the pathway amino-acid biosynthesis; L-arginine biosynthesis; L-arginine from L-ornithine and carbamoyl phosphate: step 3/3. This chain is Argininosuccinate lyase, found in Staphylococcus saprophyticus subsp. saprophyticus (strain ATCC 15305 / DSM 20229 / NCIMB 8711 / NCTC 7292 / S-41).